Here is a 107-residue protein sequence, read N- to C-terminus: Iron-sulfur cluster assembly protein CyaY (107 aa).

Belongs to the frataxin family.

Functionally, involved in iron-sulfur (Fe-S) cluster assembly. May act as a regulator of Fe-S biogenesis. The chain is Iron-sulfur cluster assembly protein CyaY from Enterobacter sp. (strain 638).